The primary structure comprises 360 residues: Codeine O-demethylase (360 aa).

In terms of domain architecture, Fe2OG dioxygenase spans 211–311; it reads GLQTMRMNYY…RLSIATFHDS (101 aa). Residue Tyr-220 participates in 2-oxoglutarate binding. Positions 235, 237, and 292 each coordinate Fe cation. Residues Arg-302 and Ser-304 each contribute to the 2-oxoglutarate site.

This sequence belongs to the iron/ascorbate-dependent oxidoreductase family. It depends on L-ascorbate as a cofactor. The cofactor is Fe cation. Mainly expressed in stems, capsules and leaves and, to a lower extent, in roots.

It carries out the reaction codeine + 2-oxoglutarate + O2 = morphine + formaldehyde + succinate + CO2. The enzyme catalyses thebaine + 2-oxoglutarate + O2 = oripavine + formaldehyde + succinate + CO2. The catalysed reaction is (S)-scoulerine + 2-oxoglutarate + O2 = (S)-3-O-demethylscoulerine + formaldehyde + succinate + CO2. It catalyses the reaction thebaine + 2-oxoglutarate + O2 = neopinone + formaldehyde + succinate + CO2. It carries out the reaction (S)-reticuline + 2-oxoglutarate + O2 = (S)-6-O-demethylreticuline + formaldehyde + succinate + CO2. The enzyme catalyses (S)-tetrahydropalmatine + S-adenosyl-L-methionine = (S)-cis-N-methyltetrahydropalmatine + S-adenosyl-L-homocysteine. It functions in the pathway alkaloid biosynthesis; morphine biosynthesis. Its activity is regulated as follows. Moderate substrate inhibition. Not inhibited in vitro by acylcyclohexanediones. In terms of biological role, non-heme dioxygenase involved in biosynthesis of morphinan-type benzylisoquinoline and opiate alkaloids natural products. Mediates the conversion of codeine to morphine. Also catalyzes, with lower efficiency, the 3-O-demethylation of thebaine to oripavine and of (S)-scoulerine to 3-O-demethylscoulerine. Supports, with a lower turnover, the conversion of codeinone to morphinone, of thebaine to neopinone, and of neopine to neomorphine. Supports dealkylation reactions such as O,O-demethylenation in the metabolism of protopine, benzo[c]phenanthridine, and rhoeadine alkaloids; cleaves a methylenedioxy bridge leaving two hydroxyl groups. Catalyzes the O,O-demethylenation of methylenedioxy bridges on protopine alkaloids such as allocryptopine, cryptopine and protopine. No activity with (S)-reticuline, salutaridine, papaverine, (S)-corytuberine, oripavine, pavine or noscapine. This chain is Codeine O-demethylase, found in Papaver somniferum (Opium poppy).